A 526-amino-acid chain; its full sequence is Zinc finger protein 69 homolog (526 aa).

The SCAN box domain maps to 1–39; sequence MPQQLLITLPTEASTWVKLQHPKKAVEGAPLWEDVTKMF. A KRAB domain is found at 76–147; that stretch reads LTFKDISIDF…EKEGPGDPSS (72 aa). 9 consecutive C2H2-type zinc fingers follow at residues 271–293, 299–321, 327–349, 355–377, 383–405, 411–433, 439–461, 467–489, and 495–517; these read YECN…MRIH, FRCK…QRIH, FECE…HRTH, YVCD…LRTH, FTCN…IRIH, YACT…QRIH, YKCK…KTVH, YECN…QRHH, and YECN…HEIH.

This sequence belongs to the krueppel C2H2-type zinc-finger protein family. Expressed in visceral and subcutaneous adipose tissue.

It localises to the nucleus. Functionally, putative transcription factor that appears to regulate lipid metabolism. The chain is Zinc finger protein 69 homolog (ZFP69) from Homo sapiens (Human).